A 525-amino-acid polypeptide reads, in one-letter code: Cytochrome P450 monooxygenase bsc2 (525 aa).

Residues 12–32 (SLFILWLTTLLVSVLATAAYI) traverse the membrane as a helical segment. N-linked (GlcNAc...) asparagine glycosylation is found at N86 and N317. C456 is a binding site for heme.

This sequence belongs to the cytochrome P450 family. Heme is required as a cofactor.

The protein localises to the membrane. It functions in the pathway mycotoxin biosynthesis. Its function is as follows. Cytochrome P450 monooxygenase; part of the gene cluster that mediates the biosynthesis of the diterpene glucoside brassicicene C. In the first step of the brassicicene C biosynthesis, the bifunctional diterpene synthase bsc8 that possesses both prenyl transferase and terpene cyclase activity, converts isopentenyl diphosphate and dimethylallyl diphosphate into geranylgeranyl diphosphate (GGDP) that is further converted into fusicocca-2,10(14)-diene, the first precursor for brassicicene C. Fusicocca-2,10(14)-diene is then substrate of cytochrome P450 monooxygenase bsc1 for hydroxylation at the C-8 position. Oxidation at C-16 position to aldehyde is then catalyzed by the cytochrome P450 monooyxygenase bsc7, yielding fusicocca-2,10(14)-diene-8-beta,16-diol. Follows the isomerization of the double bond and reduction of aldehyde to alcohol catalyzed by the short-chain dehydrogenase/reductase bsc3 to yield the diol compound fusicocca-1,10(14)-diene-8 beta,16-diol. The next step is the oxidation at the C-3 position of fusicocca-2,10(14)-diene-8-beta,16-diol catalyzed by the alpha-ketoglutarate dependent dioxygenase bsc9, to produce a triol compound. Methylation of the hydroxy group at position 16 is performed by the methyltransferase bsc6. 16-O-methylation is followed by oxidation at the C-13 position to ketone and an alkyl shift of the methyl group leads to brassicicene C. Although the probable acetyltransferase bsc4 is included in the gene cluster, no acetylation reactions are necessary for brassicicene C biosynthesis. However, the fact that brassicicene E, which is a structurally related compound having an acetoxy group at position 12, was previously isolated from another strain of A.brassicicola suggests that the ATCC 96836 strain might also produce a small amount of brassicicene E. This Alternaria brassicicola (Dark leaf spot agent) protein is Cytochrome P450 monooxygenase bsc2.